Consider the following 87-residue polypeptide: Small ribosomal subunit protein uS19 (87 aa).

The protein belongs to the universal ribosomal protein uS19 family.

Functionally, protein S19 forms a complex with S13 that binds strongly to the 16S ribosomal RNA. In Mycoplasma pneumoniae (strain ATCC 29342 / M129 / Subtype 1) (Mycoplasmoides pneumoniae), this protein is Small ribosomal subunit protein uS19 (rpsS).